A 384-amino-acid polypeptide reads, in one-letter code: Probable tRNA sulfurtransferase (384 aa).

Residues 57–160 (EEVVDRVRNV…KKTYIYSKRI (104 aa)) form the THUMP domain. ATP is bound by residues 177–178 (ML), 202–203 (YF), Arg-259, Gly-281, and Gln-290.

Belongs to the ThiI family.

The protein resides in the cytoplasm. The enzyme catalyses [ThiI sulfur-carrier protein]-S-sulfanyl-L-cysteine + a uridine in tRNA + 2 reduced [2Fe-2S]-[ferredoxin] + ATP + H(+) = [ThiI sulfur-carrier protein]-L-cysteine + a 4-thiouridine in tRNA + 2 oxidized [2Fe-2S]-[ferredoxin] + AMP + diphosphate. It catalyses the reaction [ThiS sulfur-carrier protein]-C-terminal Gly-Gly-AMP + S-sulfanyl-L-cysteinyl-[cysteine desulfurase] + AH2 = [ThiS sulfur-carrier protein]-C-terminal-Gly-aminoethanethioate + L-cysteinyl-[cysteine desulfurase] + A + AMP + 2 H(+). Its pathway is cofactor biosynthesis; thiamine diphosphate biosynthesis. Catalyzes the ATP-dependent transfer of a sulfur to tRNA to produce 4-thiouridine in position 8 of tRNAs, which functions as a near-UV photosensor. Also catalyzes the transfer of sulfur to the sulfur carrier protein ThiS, forming ThiS-thiocarboxylate. This is a step in the synthesis of thiazole, in the thiamine biosynthesis pathway. The sulfur is donated as persulfide by IscS. The sequence is that of Probable tRNA sulfurtransferase from Clostridium acetobutylicum (strain ATCC 824 / DSM 792 / JCM 1419 / IAM 19013 / LMG 5710 / NBRC 13948 / NRRL B-527 / VKM B-1787 / 2291 / W).